Reading from the N-terminus, the 146-residue chain is Ribosome-binding factor A (146 aa).

The disordered stretch occupies residues 125–146; the sequence is RDLDADDDKTKDDRAKDDKDSE.

The protein belongs to the RbfA family. As to quaternary structure, monomer. Binds 30S ribosomal subunits, but not 50S ribosomal subunits or 70S ribosomes.

The protein localises to the cytoplasm. In terms of biological role, one of several proteins that assist in the late maturation steps of the functional core of the 30S ribosomal subunit. Associates with free 30S ribosomal subunits (but not with 30S subunits that are part of 70S ribosomes or polysomes). Required for efficient processing of 16S rRNA. May interact with the 5'-terminal helix region of 16S rRNA. This Mesorhizobium japonicum (strain LMG 29417 / CECT 9101 / MAFF 303099) (Mesorhizobium loti (strain MAFF 303099)) protein is Ribosome-binding factor A.